We begin with the raw amino-acid sequence, 364 residues long: Dihydroorotate dehydrogenase (quinone) (364 aa).

FMN contacts are provided by residues 61–65 and T85; that span reads AGYDK. K65 lines the substrate pocket. Residue 110 to 114 participates in substrate binding; it reads NRLGF. N139 and N170 together coordinate FMN. Substrate is bound at residue N170. S173 acts as the Nucleophile in catalysis. N175 contacts substrate. Residues K215 and S243 each coordinate FMN. Substrate is bound at residue 244-245; the sequence is NT. FMN is bound by residues G266, G295, and 316-317; that span reads YS.

It belongs to the dihydroorotate dehydrogenase family. Type 2 subfamily. In terms of assembly, monomer. It depends on FMN as a cofactor.

The protein resides in the cell membrane. It catalyses the reaction (S)-dihydroorotate + a quinone = orotate + a quinol. It functions in the pathway pyrimidine metabolism; UMP biosynthesis via de novo pathway; orotate from (S)-dihydroorotate (quinone route): step 1/1. In terms of biological role, catalyzes the conversion of dihydroorotate to orotate with quinone as electron acceptor. The protein is Dihydroorotate dehydrogenase (quinone) of Brucella melitensis biotype 2 (strain ATCC 23457).